Reading from the N-terminus, the 302-residue chain is Homoserine O-acetyltransferase (302 aa).

The active-site Acyl-thioester intermediate is C142. Substrate is bound by residues K163 and S192. H235 serves as the catalytic Proton acceptor. The active site involves E237. R249 contacts substrate.

The protein belongs to the MetA family.

The protein resides in the cytoplasm. It catalyses the reaction L-homoserine + acetyl-CoA = O-acetyl-L-homoserine + CoA. Its pathway is amino-acid biosynthesis; L-methionine biosynthesis via de novo pathway; O-acetyl-L-homoserine from L-homoserine: step 1/1. In terms of biological role, transfers an acetyl group from acetyl-CoA to L-homoserine, forming acetyl-L-homoserine. This is Homoserine O-acetyltransferase from Clostridium novyi (strain NT).